Here is a 761-residue protein sequence, read N- to C-terminus: BMP/retinoic acid-inducible neural-specific protein 1 (761 aa).

The first 22 residues, Met-1 to Pro-22, serve as a signal peptide directing secretion. Residues Arg-68–Met-251 form the MACPF domain. N-linked (GlcNAc...) asparagine glycans are attached at residues Asn-156, Asn-433, Asn-443, Asn-553, Asn-599, Asn-631, and Asn-677.

The protein belongs to the BRINP family.

Its subcellular location is the cytoplasm. Plays a role in neurogenesis and brain development. May suppress cell cycle progression in postmitotic neurons by inhibiting G1/S transition. The polypeptide is BMP/retinoic acid-inducible neural-specific protein 1 (BRINP1) (Gallus gallus (Chicken)).